Consider the following 342-residue polypeptide: GTPase Obg (342 aa).

The region spanning 1-159 is the Obg domain; sequence MQFIDQAKIE…KQLRLELKLL (159 aa). The 171-residue stretch at 160–330 folds into the OBG-type G domain; that stretch reads AEVGIIGLPN…MLQEIWGILD (171 aa). GTP is bound by residues 166–173, 191–195, 213–216, 280–283, and 311–313; these read GLPNAGKS, FTTLI, DIPG, NKID, and SAV. The Mg(2+) site is built by Ser173 and Thr193.

It belongs to the TRAFAC class OBG-HflX-like GTPase superfamily. OBG GTPase family. As to quaternary structure, monomer. Requires Mg(2+) as cofactor.

The protein resides in the cytoplasm. In terms of biological role, an essential GTPase which binds GTP, GDP and possibly (p)ppGpp with moderate affinity, with high nucleotide exchange rates and a fairly low GTP hydrolysis rate. Plays a role in control of the cell cycle, stress response, ribosome biogenesis and in those bacteria that undergo differentiation, in morphogenesis control. This is GTPase Obg from Nostoc punctiforme (strain ATCC 29133 / PCC 73102).